We begin with the raw amino-acid sequence, 213 residues long: Ras-related protein RabK1 (213 aa).

14-21 (GDRMVGKL) lines the GTP pocket. The Effector region signature appears at 36–43 (GNSIPFDF). Residues 61–65 (NTHGS) and 119–122 (TKSD) contribute to the GTP site.

It belongs to the small GTPase superfamily. Rab family.

The protein is Ras-related protein RabK1 (rabK1) of Dictyostelium discoideum (Social amoeba).